The sequence spans 132 residues: Small ribosomal subunit protein uS8 (132 aa).

This sequence belongs to the universal ribosomal protein uS8 family. As to quaternary structure, part of the 30S ribosomal subunit. Contacts proteins S5 and S12.

In terms of biological role, one of the primary rRNA binding proteins, it binds directly to 16S rRNA central domain where it helps coordinate assembly of the platform of the 30S subunit. This is Small ribosomal subunit protein uS8 from Bacillus cytotoxicus (strain DSM 22905 / CIP 110041 / 391-98 / NVH 391-98).